The sequence spans 175 residues: RNA pyrophosphohydrolase (175 aa).

A Nudix hydrolase domain is found at proline 8–lysine 159. A Nudix box motif is present at residues glycine 47 to serine 68.

Belongs to the Nudix hydrolase family. RppH subfamily. A divalent metal cation is required as a cofactor.

Accelerates the degradation of transcripts by removing pyrophosphate from the 5'-end of triphosphorylated RNA, leading to a more labile monophosphorylated state that can stimulate subsequent ribonuclease cleavage. The sequence is that of RNA pyrophosphohydrolase from Rhodopseudomonas palustris (strain BisB18).